Here is a 283-residue protein sequence, read N- to C-terminus: Pantothenate synthetase (283 aa).

30-37 is an ATP binding site; sequence MGNLHDGH. Catalysis depends on His37, which acts as the Proton donor. Residue Gln61 participates in (R)-pantoate binding. Residue Gln61 participates in beta-alanine binding. 149–152 lines the ATP pocket; the sequence is GEKD. Gln155 is a (R)-pantoate binding site. ATP is bound at residue 186 to 189; that stretch reads LSSR.

Belongs to the pantothenate synthetase family. Homodimer.

It is found in the cytoplasm. It catalyses the reaction (R)-pantoate + beta-alanine + ATP = (R)-pantothenate + AMP + diphosphate + H(+). It participates in cofactor biosynthesis; (R)-pantothenate biosynthesis; (R)-pantothenate from (R)-pantoate and beta-alanine: step 1/1. Catalyzes the condensation of pantoate with beta-alanine in an ATP-dependent reaction via a pantoyl-adenylate intermediate. This Escherichia coli O6:H1 (strain CFT073 / ATCC 700928 / UPEC) protein is Pantothenate synthetase.